We begin with the raw amino-acid sequence, 315 residues long: Ribose-phosphate pyrophosphokinase (315 aa).

Residues 41–43 (DGE) and 100–101 (RQ) contribute to the ATP site. Residues His-134 and Asp-173 each contribute to the Mg(2+) site. The active site involves Lys-196. D-ribose 5-phosphate-binding positions include Arg-198, Asp-222, and 226–230 (DTAGT).

It belongs to the ribose-phosphate pyrophosphokinase family. Class I subfamily. As to quaternary structure, homohexamer. Mg(2+) serves as cofactor.

Its subcellular location is the cytoplasm. The catalysed reaction is D-ribose 5-phosphate + ATP = 5-phospho-alpha-D-ribose 1-diphosphate + AMP + H(+). It functions in the pathway metabolic intermediate biosynthesis; 5-phospho-alpha-D-ribose 1-diphosphate biosynthesis; 5-phospho-alpha-D-ribose 1-diphosphate from D-ribose 5-phosphate (route I): step 1/1. Its function is as follows. Involved in the biosynthesis of the central metabolite phospho-alpha-D-ribosyl-1-pyrophosphate (PRPP) via the transfer of pyrophosphoryl group from ATP to 1-hydroxyl of ribose-5-phosphate (Rib-5-P). This is Ribose-phosphate pyrophosphokinase from Bacillus caldolyticus.